The following is a 148-amino-acid chain: UPF0178 protein SUN_1096 (148 aa).

It belongs to the UPF0178 family.

The chain is UPF0178 protein SUN_1096 from Sulfurovum sp. (strain NBC37-1).